A 291-amino-acid polypeptide reads, in one-letter code: B3 domain-containing protein At2g16210 (291 aa).

A DNA-binding region (TF-B3 1) is located at residues 19 to 114 (FFKVVQSINV…HFTVNIFKLD (96 aa)). Polar residues predominate over residues 149–159 (VSSNRGQTTAA). The disordered stretch occupies residues 149–182 (VSSNRGQTTAAESKGRKLNLGKRAAKESQSSKRT). Residues 172-182 (AAKESQSSKRT) show a composition bias toward basic and acidic residues. Positions 200–291 (AAAFTILFKQ…KELLLVVSKP (92 aa)) form a DNA-binding region, TF-B3 2.

The protein localises to the nucleus. The sequence is that of B3 domain-containing protein At2g16210 from Arabidopsis thaliana (Mouse-ear cress).